We begin with the raw amino-acid sequence, 553 residues long: Transcription factor GAMYB (553 aa).

Positions 1–17 are enriched in basic and acidic residues; that stretch reads MYRVKSESDCEMIHQEQ. The segment at 1 to 45 is disordered; the sequence is MYRVKSESDCEMIHQEQMDSPVADDGSSGGSPHRGGGPPLKKGPW. A compositionally biased stretch (gly residues) spans 27 to 38; the sequence is SSGGSPHRGGGP. HTH myb-type domains are found at residues 37–89 and 90–144; these read GPPL…ANHL and RPNL…KRCQ. 2 DNA-binding regions (H-T-H motif) span residues 65-89 and 117-140; these read WNAV…ANHL and WARM…NTRI. Residues 464 to 488 are disordered; sequence PAQSTSMGSGEQVMGPKYEPGDTSP.

It is found in the nucleus. Transcriptional activator of gibberellin-dependent alpha-amylase expression in aleurone cells. Involved in pollen and floral organs development. May bind to the 5'-TAACAAA-3' box of alpha-amylase promoter. This is Transcription factor GAMYB (GAM1) from Oryza sativa subsp. indica (Rice).